A 230-amino-acid chain; its full sequence is Large ribosomal subunit protein uL1 (230 aa).

It belongs to the universal ribosomal protein uL1 family. In terms of assembly, part of the 50S ribosomal subunit.

Its function is as follows. Binds directly to 23S rRNA. The L1 stalk is quite mobile in the ribosome, and is involved in E site tRNA release. Functionally, protein L1 is also a translational repressor protein, it controls the translation of the L11 operon by binding to its mRNA. The protein is Large ribosomal subunit protein uL1 of Paramagnetospirillum magneticum (strain ATCC 700264 / AMB-1) (Magnetospirillum magneticum).